The sequence spans 312 residues: Zinc finger CCCH domain-containing protein 25 (312 aa).

An RRM domain is found at 36–114 (AYVFVGGIPY…RIVRVDHVSK (79 aa)). Residues 130-157 (REARGVCYAFQKGECNRGASCRYSHDEQ) form a C3H1-type zinc finger. Positions 153–312 (SHDEQRNANT…DSERYRKSRR (160 aa)) are disordered. Composition is skewed to basic and acidic residues over residues 166–184 (SKEESKARWEHDRHHEPPM), 197–210 (RFPDRAKEENKSTG), and 219–312 (EAYK…KSRR).

In Oryza sativa subsp. japonica (Rice), this protein is Zinc finger CCCH domain-containing protein 25.